Here is a 667-residue protein sequence, read N- to C-terminus: E3 ubiquitin-protein ligase Midline-1 (667 aa).

An RING-type zinc finger spans residues 10–60 (CPICLELLEDPLLLPCAHSLCFNCAHRILVSHCATNEPVESINAFQCPTCR). Phosphoserine occurs at positions 92 and 96. 2 consecutive B box-type zinc fingers follow at residues 116 to 165 (KVLC…IEPI) and 172 to 212 (GLMC…VAAL). Residues Cys119, Cys122, Cys134, Cys137, Cys142, Cys145, His150, His159, Cys175, His178, Cys198, and His204 each contribute to the Zn(2+) site. A coiled-coil region spans residues 205-264 (RDHQVAALSERYDKLKQNLESNLTNLIKRNTELETLLAKLIQTCQHVEVNASRQEAKLTE). The COS domain maps to 320–379 (LKENDHARFLQTAKNITERVSMATASSQVLIPEINLNDTFDTFALDFSREKKLLECLDYL). In terms of domain architecture, Fibronectin type-III spans 381–484 (APNPPTIREE…EPGKLKTNSQ (104 aa)). A compositionally biased stretch (polar residues) spans 471–485 (SRSSEPGKLKTNSQP). The segment at 471-524 (SRSSEPGKLKTNSQPFKLDPKSAHRKLKVSHDNLTVERDESSSKKSHTPERFTS) is disordered. Positions 482 to 659 (NSQPFKLDPK…IITGLPIPDH (178 aa)) constitute a B30.2/SPRY domain. Basic and acidic residues predominate over residues 499–520 (VSHDNLTVERDESSSKKSHTPE). Ser511 is modified (phosphoserine).

It belongs to the TRIM/RBCC family. Homodimer or heterodimer with MID2. Interacts with IGBP1.

The protein localises to the cytoplasm. It localises to the cytoskeleton. It carries out the reaction S-ubiquitinyl-[E2 ubiquitin-conjugating enzyme]-L-cysteine + [acceptor protein]-L-lysine = [E2 ubiquitin-conjugating enzyme]-L-cysteine + N(6)-ubiquitinyl-[acceptor protein]-L-lysine.. In terms of biological role, has E3 ubiquitin ligase activity towards IGBP1, promoting its monoubiquitination, which results in deprotection of the catalytic subunit of protein phosphatase PP2A, and its subsequent degradation by polyubiquitination. This chain is E3 ubiquitin-protein ligase Midline-1 (Mid1), found in Mus spretus (Western Mediterranean mouse).